Consider the following 65-residue polypeptide: Large ribosomal subunit protein uL29 (65 aa).

It belongs to the universal ribosomal protein uL29 family.

In Mycoplasmopsis pulmonis (strain UAB CTIP) (Mycoplasma pulmonis), this protein is Large ribosomal subunit protein uL29.